The following is a 341-amino-acid chain: L-threonine 3-dehydrogenase (341 aa).

C38 serves as a coordination point for Zn(2+). Residues T40 and H43 each act as charge relay system in the active site. The Zn(2+) site is built by H63, E64, C93, C96, C99, and C107. NAD(+) contacts are provided by residues I175, D195, R200, L262 to I264, and I286 to Y287.

Belongs to the zinc-containing alcohol dehydrogenase family. As to quaternary structure, homotetramer. Requires Zn(2+) as cofactor.

It localises to the cytoplasm. It catalyses the reaction L-threonine + NAD(+) = (2S)-2-amino-3-oxobutanoate + NADH + H(+). Its pathway is amino-acid degradation; L-threonine degradation via oxydo-reductase pathway; glycine from L-threonine: step 1/2. In terms of biological role, catalyzes the NAD(+)-dependent oxidation of L-threonine to 2-amino-3-ketobutyrate. This chain is L-threonine 3-dehydrogenase, found in Shewanella baltica (strain OS223).